The primary structure comprises 150 residues: Transmembrane protein PMIS2 (150 aa).

The span at 1 to 12 (MALKPPSATQPA) shows a compositional bias: low complexity. The tract at residues 1–61 (MALKPPSATQ…EPQEPTQTPE (61 aa)) is disordered. Over residues 13–22 (PNAPATPDAP) the composition is skewed to pro residues. Residues 23-61 (PTTGDPGASAAPGSPTTTGGPGAPAEVPQEPQEPTQTPE) show a composition bias toward low complexity. 2 helical membrane passes run 71 to 91 (LCLT…ALYF) and 130 to 150 (GWFG…LVLY).

The protein belongs to the CD225/Dispanin family.

The protein localises to the membrane. Functionally, may play a role in spermatozoa mobility. This chain is Transmembrane protein PMIS2, found in Homo sapiens (Human).